Consider the following 311-residue polypeptide: Malate dehydrogenase (311 aa).

Residues 7-13 (GAAGGIG) and Asp34 contribute to the NAD(+) site. Substrate is bound by residues Arg81 and Arg87. NAD(+)-binding positions include Asn94 and 117-119 (ITN). Asn119 and Arg153 together coordinate substrate. Residue His177 is the Proton acceptor of the active site. Met227 provides a ligand contact to NAD(+).

Belongs to the LDH/MDH superfamily. MDH type 1 family. Homodimer.

It catalyses the reaction (S)-malate + NAD(+) = oxaloacetate + NADH + H(+). Functionally, catalyzes the reversible oxidation of malate to oxaloacetate. The protein is Malate dehydrogenase of Shewanella sp. (strain MR-4).